Here is a 308-residue protein sequence, read N- to C-terminus: Putative mitochondrial transporter UCP3 (308 aa).

Topologically, residues 1-10 (MVGLKPPEVP) are mitochondrial intermembrane. The helical transmembrane segment at 11-32 (PTTAVKLLGAGTAACFADLLTF) threads the bilayer. Solcar repeat units lie at residues 11–102 (PTTA…VKQL), 111–202 (SSIT…IKEK), and 211–296 (DNLP…LKRA). The Mitochondrial matrix segment spans residues 33–73 (PLDTAKVRLQIQGENQAARSAQYRGVLGTILTMVRNEGPRS). The helical transmembrane segment at 74-96 (PYNGLVAGLQRQMSFASIRIGLY) threads the bilayer. The Mitochondrial intermembrane portion of the chain corresponds to 97–116 (DSVKQLYTPKGSDHSSITTR). Residues 117–133 (ILAGCTTGAMAVTCAQP) traverse the membrane as a helical segment. Residues 134–179 (TDVVKVRFQASIHAGPRSNRKYSGTMDAYRTIAREEGVRGLWKGIL) are Mitochondrial matrix-facing. The chain crosses the membrane as a helical span at residues 180–196 (PNITRNAIVNCAEMVTY). The Mitochondrial intermembrane portion of the chain corresponds to 197 to 213 (DVIKEKVLDYHLLTDNL). Residues 214-233 (PCHFVSAFGAGFCATVVASP) traverse the membrane as a helical segment. At 234 to 267 (VDVVKTRYMNSPPGQYQNPLDCMLKMVTQEGPTA) the chain is on the mitochondrial matrix side. Residues 268-290 (FYKGFTPSFLRLGSWNVVMFVSY) form a helical membrane-spanning segment. A purine nucleotide binding region spans residues 275–297 (SFLRLGSWNVVMFVSYEQLKRAL). Over 291–308 (EQLKRALMKVQMLRESPF) the chain is Mitochondrial intermembrane.

The protein belongs to the mitochondrial carrier (TC 2.A.29) family. Interacts with HAX1; the interaction is direct and calcium-dependent.

The protein localises to the mitochondrion inner membrane. Its function is as follows. Putative transmembrane transporter that plays a role in mitochondrial metabolism via an as yet unclear mechanism. Originally, this mitochondrial protein was thought to act as a proton transmembrane transporter from the mitochondrial intermembrane space into the matrix, causing proton leaks through the inner mitochondrial membrane, thereby uncoupling mitochondrial membrane potential generation from ATP synthesis. However, this function is controversial and uncoupling may not be the function, or at least not the main function, but rather a consequence of more conventional metabolite transporter activity. This is Putative mitochondrial transporter UCP3 from Sus scrofa (Pig).